The following is a 317-amino-acid chain: Putative methyltransferase YMR310C (317 aa).

At Ser-190 the chain carries Phosphoserine.

This sequence belongs to the class IV-like SAM-binding methyltransferase superfamily.

It localises to the nucleus. The polypeptide is Putative methyltransferase YMR310C (Saccharomyces cerevisiae (strain ATCC 204508 / S288c) (Baker's yeast)).